The chain runs to 406 residues: Phosphopentomutase (406 aa).

Asp-10, Asp-305, His-310, Asp-346, His-347, and His-358 together coordinate Mn(2+).

This sequence belongs to the phosphopentomutase family. The cofactor is Mn(2+).

The protein localises to the cytoplasm. It catalyses the reaction 2-deoxy-alpha-D-ribose 1-phosphate = 2-deoxy-D-ribose 5-phosphate. It carries out the reaction alpha-D-ribose 1-phosphate = D-ribose 5-phosphate. Its pathway is carbohydrate degradation; 2-deoxy-D-ribose 1-phosphate degradation; D-glyceraldehyde 3-phosphate and acetaldehyde from 2-deoxy-alpha-D-ribose 1-phosphate: step 1/2. In terms of biological role, isomerase that catalyzes the conversion of deoxy-ribose 1-phosphate (dRib-1-P) and ribose 1-phosphate (Rib-1-P) to deoxy-ribose 5-phosphate (dRib-5-P) and ribose 5-phosphate (Rib-5-P), respectively. This chain is Phosphopentomutase, found in Vibrio cholerae serotype O1 (strain ATCC 39541 / Classical Ogawa 395 / O395).